A 159-amino-acid chain; its full sequence is MDSTGTGAGGKGKKGAAGRKVGGPRKKSVSRSVKAGLQFPVGRIGRYLKKGRYAQXVGTGAPVYLAAVLEYLAAEVLELAGNAARDNKKTRIIPRHVLLAIRNDEELGKLLGGVTIAHGGVLPNINPVLLPKKTAEKASSGGSKEAKSPKKAAKSPKKA.

Residues methionine 1–glycine 10 are compositionally biased toward gly residues. Disordered regions lie at residues methionine 1 to arginine 31 and lysine 133 to alanine 159. Composition is skewed to basic residues over residues lysine 11–valine 29 and proline 149–alanine 159. 2 short sequence motifs (SPKK motif) span residues serine 148 to lysine 151 and serine 155 to lysine 158.

This sequence belongs to the histone H2A family. The nucleosome is a histone octamer containing two molecules each of H2A, H2B, H3 and H4 assembled in one H3-H4 heterotetramer and two H2A-H2B heterodimers. The octamer wraps approximately 147 bp of DNA.

The protein resides in the nucleus. It is found in the chromosome. Functionally, core component of nucleosome. Nucleosomes wrap and compact DNA into chromatin, limiting DNA accessibility to the cellular machineries which require DNA as a template. Histones thereby play a central role in transcription regulation, DNA repair, DNA replication and chromosomal stability. DNA accessibility is regulated via a complex set of post-translational modifications of histones, also called histone code, and nucleosome remodeling. This chain is Histone H2A, found in Zea mays (Maize).